The following is a 158-amino-acid chain: MELLTNFPLLSSLAAIIFAQVIKVPIQFIVSRKLDWSLVTSTGGMPSSHSAAVTALSTGVALEHGLDSSLFAVSAIFAVITMFDATGVRRHAGEQATVINKLVIDFNRFVNEAKDFPKAAEKEKQKKLKELLGHQPIEVFFGGLTGILLTLVLAYFFM.

2 consecutive transmembrane segments (helical) span residues 10–30 and 137–157; these read LSSL…QFIV and IEVF…AYFF.

It is found in the cell membrane. This is an uncharacterized protein from Bacillus subtilis (strain 168).